We begin with the raw amino-acid sequence, 86 residues long: Small ribosomal subunit protein uS17 (86 aa).

Belongs to the universal ribosomal protein uS17 family. In terms of assembly, part of the 30S ribosomal subunit.

Its function is as follows. One of the primary rRNA binding proteins, it binds specifically to the 5'-end of 16S ribosomal RNA. The chain is Small ribosomal subunit protein uS17 from Roseiflexus castenholzii (strain DSM 13941 / HLO8).